A 189-amino-acid polypeptide reads, in one-letter code: MTIKSDRWIRHMAQEHGMIEPFEPGQVRDTPEGQRVISYGTSSYGYDVRCGKDFKIFTDINSAVVDPKNFDAASFVDVHGDVCIIPPNSFALAYTLEYFRIPRNVLTICLGKSTYARCGIIVNVTPLEPEWEGRVTLEFSNTTPLPAKIHANEGVAQMLFFESDEPCEVSYADRGGKYMGQDGVTLPRS.

Residues 112–117, 136–138, Q157, Y171, and Q181 each bind dCTP; these read KSTYAR and TLE. E138 acts as the Proton donor/acceptor in catalysis.

It belongs to the dCTP deaminase family. Homotrimer.

The enzyme catalyses dCTP + H2O + H(+) = dUTP + NH4(+). It participates in pyrimidine metabolism; dUMP biosynthesis; dUMP from dCTP (dUTP route): step 1/2. Its function is as follows. Catalyzes the deamination of dCTP to dUTP. The protein is dCTP deaminase of Halorhodospira halophila (strain DSM 244 / SL1) (Ectothiorhodospira halophila (strain DSM 244 / SL1)).